The sequence spans 77 residues: Translation initiation factor IF-1, chloroplastic (77 aa).

Positions 1 to 71 (MKEQKWVHEG…TRGRIIYRLR (71 aa)) constitute an S1-like domain.

This sequence belongs to the IF-1 family. As to quaternary structure, component of the 30S ribosomal translation pre-initiation complex which assembles on the 30S ribosome in the order IF-2 and IF-3, IF-1 and N-formylmethionyl-tRNA(fMet); mRNA recruitment can occur at any time during PIC assembly.

The protein localises to the plastid. It localises to the chloroplast. In terms of biological role, one of the essential components for the initiation of protein synthesis. Stabilizes the binding of IF-2 and IF-3 on the 30S subunit to which N-formylmethionyl-tRNA(fMet) subsequently binds. Helps modulate mRNA selection, yielding the 30S pre-initiation complex (PIC). Upon addition of the 50S ribosomal subunit IF-1, IF-2 and IF-3 are released leaving the mature 70S translation initiation complex. This Cercidiphyllum japonicum (Katsura tree) protein is Translation initiation factor IF-1, chloroplastic.